Consider the following 105-residue polypeptide: Small ribosomal subunit protein uS10 (105 aa).

This sequence belongs to the universal ribosomal protein uS10 family. Part of the 30S ribosomal subunit.

In terms of biological role, involved in the binding of tRNA to the ribosomes. This chain is Small ribosomal subunit protein uS10, found in Agathobacter rectalis (strain ATCC 33656 / DSM 3377 / JCM 17463 / KCTC 5835 / VPI 0990) (Eubacterium rectale).